A 632-amino-acid chain; its full sequence is Serine/threonine-protein kinase plk-2 (632 aa).

The segment at 1 to 26 (MQRVQPSAARVKSQKKEKAPPDVPDV) is disordered. Residues 36-287 (YEKGKFLGKG…ARAVCRDHFF (252 aa)) form the Protein kinase domain. Residues 42-50 (LGKGGFAHC) and K65 each bind ATP. D159 acts as the Proton acceptor in catalysis. The tract at residues 313-334 (AEENVSPSGTIDQRGPHQAGRS) is disordered. 2 consecutive POLO box domains span residues 405-484 (WISK…YMND) and 506-588 (TLRV…RLVE).

The protein belongs to the protein kinase superfamily. Ser/Thr protein kinase family. CDC5/Polo subfamily. Interacts (via POLO box domain) with mex-5 and mex-6. Interacts (via POLO box domain) with him-8 (via N-terminus); the interaction mediates plk-2 recruitment to the pairing region of X chromosomes during meiosis. Interacts with sun-1. May interact with nicotinic acetylcholine receptor. The cofactor is Mg(2+). In terms of tissue distribution, expressed in oocytes.

Its subcellular location is the nucleus. The protein resides in the cytoplasm. It is found in the cytoskeleton. The protein localises to the microtubule organizing center. It localises to the centrosome. Its subcellular location is the chromosome. The protein resides in the centromere. It is found in the kinetochore. The enzyme catalyses L-seryl-[protein] + ATP = O-phospho-L-seryl-[protein] + ADP + H(+). It carries out the reaction L-threonyl-[protein] + ATP = O-phospho-L-threonyl-[protein] + ADP + H(+). Functionally, serine/threonine-protein kinase which plays a role, during oogenesis, in chromosome pairing and synapsis, by facilitating the recruitment and attachment of meiotic chromosomes to the nuclear envelope during prophase. Promotes the localization of brc-1 to the short arm of homologous chromosomes during meiotic prophase I. Regulates the formation of sun-1 patches along the nuclear envelope. Promotes meiotic nuclei apoptosis in response to chromosomal asynapsis. Plays a redundant role with plk-1 in the establishment of cell polarity downstream of mex-5 and mex-6 during the first embryonic cell divisions. Plays a role in nicotinic acetylcholine receptor-mediated sensitivity to nicotine but not levamisole. Regulates motility. In Caenorhabditis elegans, this protein is Serine/threonine-protein kinase plk-2.